The sequence spans 360 residues: UDP-N-acetylglucosamine--N-acetylmuramyl-(pentapeptide) pyrophosphoryl-undecaprenol N-acetylglucosamine transferase (360 aa).

S198 and Q289 together coordinate UDP-N-acetyl-alpha-D-glucosamine.

This sequence belongs to the glycosyltransferase 28 family. MurG subfamily.

It localises to the cell membrane. The catalysed reaction is Mur2Ac(oyl-L-Ala-gamma-D-Glu-L-Lys-D-Ala-D-Ala)-di-trans,octa-cis-undecaprenyl diphosphate + UDP-N-acetyl-alpha-D-glucosamine = beta-D-GlcNAc-(1-&gt;4)-Mur2Ac(oyl-L-Ala-gamma-D-Glu-L-Lys-D-Ala-D-Ala)-di-trans,octa-cis-undecaprenyl diphosphate + UDP + H(+). Its pathway is cell wall biogenesis; peptidoglycan biosynthesis. Its function is as follows. Cell wall formation. Catalyzes the transfer of a GlcNAc subunit on undecaprenyl-pyrophosphoryl-MurNAc-pentapeptide (lipid intermediate I) to form undecaprenyl-pyrophosphoryl-MurNAc-(pentapeptide)GlcNAc (lipid intermediate II). This Streptococcus pyogenes serotype M6 (strain ATCC BAA-946 / MGAS10394) protein is UDP-N-acetylglucosamine--N-acetylmuramyl-(pentapeptide) pyrophosphoryl-undecaprenol N-acetylglucosamine transferase.